We begin with the raw amino-acid sequence, 275 residues long: Dihydroxyacetone phosphatase (275 aa).

The active-site Nucleophile is Asp10. Residues Asp10, Asp12, and Asp206 each coordinate Mg(2+). Asp12 functions as the Proton donor/acceptor in the catalytic mechanism.

The protein belongs to the HAD-like hydrolase superfamily. As to quaternary structure, homohexamer. Mg(2+) serves as cofactor.

It carries out the reaction dihydroxyacetone phosphate + H2O = dihydroxyacetone + phosphate. Functionally, catalyzes dephosphorylation of dihydroxyacetone phosphate (DHAP) to produce 1,3-dihydroxyacetone (DHA). Is the main enzyme responsible for DHA production from catabolism of sugars (glucose, fructose, and sucrose) in C.glutamicum. Displays no activity toward nucleoside monophosphates (AMP, CMP, GMP, or UMP). The chain is Dihydroxyacetone phosphatase from Corynebacterium glutamicum (strain R).